The chain runs to 633 residues: Chaperone protein HtpG (633 aa).

The segment at 1–344 (MSLQPQAETL…SNDLPLNISR (344 aa)) is a; substrate-binding. A b region spans residues 345-560 (ELLQSNEVIN…ENEMSGHLQR (216 aa)). Residues 561-633 (LLIQTGQDFM…KGLNELLLDS (73 aa)) are c.

This sequence belongs to the heat shock protein 90 family. In terms of assembly, homodimer.

It localises to the cytoplasm. In terms of biological role, molecular chaperone. Has ATPase activity. The protein is Chaperone protein HtpG of Coxiella burnetii (strain RSA 331 / Henzerling II).